The chain runs to 117 residues: Immunoglobulin kappa variable 1-33 (117 aa).

Positions 1-22 (MDMRVPAQLLGLLLLWLSGARC) are cleaved as a signal peptide. Residues 23 to 45 (DIQMTQSPSSLSASVGDRVTITC) form a framework-1 region. Residues 24–117 (IQMTQSPSSL…YYCQQYDNLP (94 aa)) form the Ig-like domain. C45 and C110 form a disulfide bridge. Residues 46-56 (QASQDISNYLN) form a complementarity-determining-1 region. The interval 57 to 71 (WYQQKPGKAPKLLIY) is framework-2. The interval 72 to 78 (DASNLET) is complementarity-determining-2. The segment at 79–110 (GVPSRFSGSGSGTDFTFTISSLQPEDIATYYC) is framework-3. Residues 111 to 117 (QQYDNLP) are complementarity-determining-3.

Immunoglobulins are composed of two identical heavy chains and two identical light chains; disulfide-linked.

The protein localises to the secreted. Its subcellular location is the cell membrane. Functionally, v region of the variable domain of immunoglobulin light chains that participates in the antigen recognition. Immunoglobulins, also known as antibodies, are membrane-bound or secreted glycoproteins produced by B lymphocytes. In the recognition phase of humoral immunity, the membrane-bound immunoglobulins serve as receptors which, upon binding of a specific antigen, trigger the clonal expansion and differentiation of B lymphocytes into immunoglobulins-secreting plasma cells. Secreted immunoglobulins mediate the effector phase of humoral immunity, which results in the elimination of bound antigens. The antigen binding site is formed by the variable domain of one heavy chain, together with that of its associated light chain. Thus, each immunoglobulin has two antigen binding sites with remarkable affinity for a particular antigen. The variable domains are assembled by a process called V-(D)-J rearrangement and can then be subjected to somatic hypermutations which, after exposure to antigen and selection, allow affinity maturation for a particular antigen. The polypeptide is Immunoglobulin kappa variable 1-33 (Homo sapiens (Human)).